The sequence spans 269 residues: 5'-nucleotidase SurE (269 aa).

Aspartate 11, aspartate 12, serine 43, and asparagine 101 together coordinate a divalent metal cation.

Belongs to the SurE nucleotidase family. A divalent metal cation is required as a cofactor.

Its subcellular location is the cytoplasm. The catalysed reaction is a ribonucleoside 5'-phosphate + H2O = a ribonucleoside + phosphate. Functionally, nucleotidase that shows phosphatase activity on nucleoside 5'-monophosphates. This Synechococcus sp. (strain WH7803) protein is 5'-nucleotidase SurE.